The primary structure comprises 384 residues: F-box A protein 224 (384 aa).

An F-box domain is found at 71–122 (PKSLSDFPIGVMYDVLGHVDPFERLVLRKVSRNLRDVVQKMRCELDALYVNK).

It belongs to the FTH family.

This is F-box A protein 224 (fbxa-224) from Caenorhabditis elegans.